A 254-amino-acid polypeptide reads, in one-letter code: Dihydroorotate dehydrogenase B (NAD(+)), electron transfer subunit (254 aa).

Positions 1 to 99 constitute an FAD-binding FR-type domain; sequence MLQTEMKVIQ…LGPLGKGFDI (99 aa). FAD is bound by residues 50-53, 67-69, and 74-75; these read RPIS, LYR, and GT. Positions 218, 223, 226, and 241 each coordinate [2Fe-2S] cluster.

Belongs to the PyrK family. In terms of assembly, heterotetramer of 2 PyrK and 2 PyrD type B subunits. [2Fe-2S] cluster is required as a cofactor. It depends on FAD as a cofactor.

The protein operates within pyrimidine metabolism; UMP biosynthesis via de novo pathway; orotate from (S)-dihydroorotate (NAD(+) route): step 1/1. Responsible for channeling the electrons from the oxidation of dihydroorotate from the FMN redox center in the PyrD type B subunit to the ultimate electron acceptor NAD(+). This is Dihydroorotate dehydrogenase B (NAD(+)), electron transfer subunit from Listeria monocytogenes serotype 4b (strain F2365).